We begin with the raw amino-acid sequence, 367 residues long: tRNA/tmRNA (uracil-C(5))-methyltransferase (367 aa).

5 residues coordinate S-adenosyl-L-methionine: Gln190, Tyr218, Asn223, Glu239, and Asp299. Cys324 serves as the catalytic Nucleophile. Residue Glu358 is the Proton acceptor of the active site.

It belongs to the class I-like SAM-binding methyltransferase superfamily. RNA M5U methyltransferase family. TrmA subfamily.

It carries out the reaction uridine(54) in tRNA + S-adenosyl-L-methionine = 5-methyluridine(54) in tRNA + S-adenosyl-L-homocysteine + H(+). It catalyses the reaction uridine(341) in tmRNA + S-adenosyl-L-methionine = 5-methyluridine(341) in tmRNA + S-adenosyl-L-homocysteine + H(+). In terms of biological role, dual-specificity methyltransferase that catalyzes the formation of 5-methyluridine at position 54 (m5U54) in all tRNAs, and that of position 341 (m5U341) in tmRNA (transfer-mRNA). This is tRNA/tmRNA (uracil-C(5))-methyltransferase from Pectobacterium atrosepticum (strain SCRI 1043 / ATCC BAA-672) (Erwinia carotovora subsp. atroseptica).